A 222-amino-acid polypeptide reads, in one-letter code: Thiol:disulfide interchange protein DsbL (222 aa).

The signal sequence occupies residues 1-27 (MSKLGISSLFKTILLTAALAVSFTASA). One can recognise a Thioredoxin domain in the interval 28-221 (FTEGTDYMVL…MADLIRELAS (194 aa)). C56 and C59 are joined by a disulfide.

It belongs to the thioredoxin family. DsbL subfamily. As to quaternary structure, interacts with DsbI.

The protein resides in the periplasm. Its function is as follows. Involved in disulfide-bond formation. Acts by transferring its disulfide bond to other proteins. Part of a redox system composed of DsbI and DsbL that mediates formation of an essential disulfide bond in AssT. The sequence is that of Thiol:disulfide interchange protein DsbL from Escherichia coli O6:H1 (strain CFT073 / ATCC 700928 / UPEC).